A 255-amino-acid chain; its full sequence is Cathepsin G (255 aa).

A signal peptide spans methionine 1–alanine 18. Positions glycine 19–glutamate 20 are cleaved as a propeptide — activation peptide. The interval isoleucine 21–arginine 25 is important for antimicrobial activity. Residues isoleucine 21–arginine 243 form the Peptidase S1 domain. Residues cysteine 49 and cysteine 65 are joined by a disulfide bond. Residue histidine 64 is the Charge relay system of the active site. N-linked (GlcNAc...) (complex) asparagine; alternate glycosylation is present at asparagine 71. Asparagine 71 carries an N-linked (GlcNAc...) (paucimannose) asparagine; alternate glycan. Residues histidine 97–leucine 111 form an important for antimicrobial activity region. Aspartate 108 serves as the catalytic Charge relay system. 2 disulfide bridges follow: cysteine 142–cysteine 207 and cysteine 172–cysteine 186. The active-site Charge relay system is serine 201. A propeptide spanning residues phenylalanine 245–leucine 255 is cleaved from the precursor.

The protein belongs to the peptidase S1 family. As to quaternary structure, (Microbial infection) Interacts with CASP4; the interaction is promoted by the Td92 surface protein of the periodontal pathogen T.denticola and leads to CASP4 activation. In terms of assembly, (Microbial infection) Interacts with M.tuberculosis protein Rv3364c. (Microbial infection) Interacts with S.aureus EapH1; EapH1 acts as a reversible inhibitor of CATG activity. Post-translationally, two C-terminal truncation variants have been identified, one which ends at Arg-243 and one which ends at Ser-244. As to expression, expressed in neutrophils (at protein level). Expressed in B cells.

The protein resides in the cell membrane. It is found in the cytoplasmic granule. The protein localises to the secreted. It localises to the cytoplasm. Its subcellular location is the cytosol. The protein resides in the lysosome. It is found in the nucleus. The catalysed reaction is Specificity similar to chymotrypsin C.. With respect to regulation, inhibited by soybean trypsin inhibitor, benzamidine, the synthetic peptide R13K, Z-Gly-Leu-Phe-CH2Cl, phenylmethylsulfonyl fluoride, 3,4-dichloroisocoumarin, DFP, SBTI and alpha-1-antitrypsin. Inhibited by LPS from P.aeruginosa but not by LPS from S.minnesota. Not inhibited by elastinal, CMK, TLCK, ETDA or leupeptin. Its activity is regulated as follows. (Microbial infection) Inhibited reversibly by S.aureus EapH1. (Microbial infection) Activity is induced by the Td92 surface protein of the periodontal pathogen T.denticola. In terms of biological role, serine protease with trypsin- and chymotrypsin-like specificity. Also displays antibacterial activity against Gram-negative and Gram-positive bacteria independent of its protease activity. Prefers Phe and Tyr residues in the P1 position of substrates but also cleaves efficiently after Trp and Leu. Shows a preference for negatively charged amino acids in the P2' position and for aliphatic amino acids both upstream and downstream of the cleavage site. Required for recruitment and activation of platelets which is mediated by the F2RL3/PAR4 platelet receptor. Binds reversibly to and stimulates B cells and CD4(+) and CD8(+) T cells. Also binds reversibly to natural killer (NK) cells and enhances NK cell cytotoxicity through its protease activity. Cleaves complement C3. Cleaves vimentin. Cleaves thrombin receptor F2R/PAR1 and acts as either an agonist or an inhibitor, depending on the F2R cleavage site. Cleavage of F2R at '41-Arg-|-Ser-42' results in receptor activation while cleavage at '55-Phe-|-Trp-56' results in inhibition of receptor activation. Cleaves the synovial mucin-type protein PRG4/lubricin. Cleaves and activates IL36G which promotes expression of chemokines CXCL1 and CXLC8 in keratinocytes. Cleaves IL33 into mature forms which have greater activity than the unprocessed form. Cleaves coagulation factor F8 to produce a partially activated form. Also cleaves and activates coagulation factor F10. Cleaves leukocyte cell surface protein SPN/CD43 to release its extracellular domain and trigger its intramembrane proteolysis by gamma-secretase, releasing the CD43 cytoplasmic tail chain (CD43-ct) which translocates to the nucleus. Cleaves CCL5/RANTES to produce RANTES(4-68) lacking the N-terminal three amino acids which exhibits reduced chemotactic and antiviral activities. During apoptosis, cleaves SMARCA2/BRM to produce a 160 kDa cleavage product which localizes to the cytosol. Cleaves myelin basic protein MBP in B cell lysosomes at '224-Phe-|-Lys-225' and '248-Phe-|-Ser-249', degrading the major immunogenic MBP epitope and preventing the activation of MBP-specific autoreactive T cells. Cleaves annexin ANXA1 and antimicrobial peptide CAMP to produce peptides which act on neutrophil N-formyl peptide receptors to enhance the release of CXCL2. Acts as a ligand for the N-formyl peptide receptor FPR1, enhancing phagocyte chemotaxis. Has antibacterial activity against the Gram-negative bacteria N.gonorrhoeae and P.aeruginosa. Likely to act against N.gonorrhoeae by interacting with N.gonorrhoeae penA/PBP2. Exhibits potent antimicrobial activity against the Gram-positive bacterium L.monocytogenes. Has antibacterial activity against the Gram-positive bacterium S.aureus and degrades S.aureus biofilms, allowing polymorphonuclear leukocytes to penetrate the biofilm and phagocytose bacteria. Has antibacterial activity against M.tuberculosis. Mediates CASP4 activation induced by the Td92 surface protein of the periodontal pathogen T.denticola, causing production and secretion of IL1A and leading to pyroptosis of gingival fibroblasts. Induces platelet aggregation which is strongly potentiated in the presence of ELANE. The sequence is that of Cathepsin G (CTSG) from Homo sapiens (Human).